The sequence spans 485 residues: Subtilisin-like protease 1 (485 aa).

Residues 1–19 (MGIFRFISISLAAVSAANA) form the signal peptide. The propeptide occupies 20–116 (GHILSMGHAK…VEPDTTITIH (97 aa)). Residues 34 to 116 (SYIVVMKDGT…VEPDTTITIH (83 aa)) form the Inhibitor I9 domain. In terms of domain architecture, Peptidase S8 spans 126–400 (SWGLARISSQ…NILINNGDAK (275 aa)). Residues aspartate 158 and histidine 190 each act as charge relay system in the active site. N-linked (GlcNAc...) asparagine glycosylation occurs at asparagine 251. Serine 345 acts as the Charge relay system in catalysis. Residues 377-394 (GTSSVTNPGPGTRTNILI) are compositionally biased toward polar residues. The tract at residues 377-462 (GTSSVTNPGP…HTPFPNDDFN (86 aa)) is disordered. Residues 409 to 418 (PSQPPKPSQP) show a composition bias toward pro residues. The span at 419 to 428 (SKPQQPSEPQ) shows a compositional bias: low complexity. Over residues 433 to 455 (PQEPAPGQPAPAPAPVPQHPHTP) the composition is skewed to pro residues.

This sequence belongs to the peptidase S8 family.

It is found in the secreted. Its function is as follows. Secreted subtilisin-like serine protease with keratinolytic activity that contributes to pathogenicity. This is Subtilisin-like protease 1 (SUB1) from Arthroderma otae (Microsporum canis).